The sequence spans 432 residues: FLYWCH-type zinc finger-containing protein peb-1 (432 aa).

The tract at residues 1–33 is disordered; sequence MLGLEKPLSSDISSSSTDTSAISPISVSSMPLS. A compositionally biased stretch (low complexity) spans 9-26; sequence SSDISSSSTDTSAISPIS. A DNA-binding region (required for DNA-binding) is located at residues 30-188; that stretch reads MPLSPDKEKK…RNKEGKPRKP (159 aa). The segment at 53–120 adopts an FLYWCH-type zinc-finger fold; sequence IVTSFKGYQK…NACTKNTHNH (68 aa). Positions 174 to 195 are disordered; sequence SLVSARNKEGKPRKPKSKTSTN.

It localises to the nucleus. In terms of biological role, putative transcription factor. Binds to specific sequence motif 5'-[TC][AGT]TGCC[GA][AT]-3' in regulatory elements of target genes such as myosin myo-2. May modulate gene expression, perhaps acting in opposition to transcription factor pha-4. Involved in morphogenesis, perhaps especially in formation of the pharynx. Plays roles in molting, feeding and morphology. The protein is FLYWCH-type zinc finger-containing protein peb-1 of Caenorhabditis briggsae.